Here is a 394-residue protein sequence, read N- to C-terminus: MKKIVLAYSGGLDTSVILKWLQENYNCEVVVFTADIGQEDDMSVIQKKAAALNVKEIFIEDLKEEFVRDFVFPMFRANTIYEGYYLLGTSIARPLIAKRQIEIAHLTGADAVAHGATGKGNDQVRFEFGYYCCDPNIKVIAPWRQWELTSRHSLIEYARKNNINVPLDKVNEPPYSIDANLLHISYEGKSLEDPYVEPDYTMLSRSLTPELASSIPEYIEITFEQGDPIAINDISLSPANLLHQLNKIGGKHGIGIVDIVENRYIGIKSRGIYETPGGTILLHAHRAIESITLDRESAHLKDEIMPKYAKLIYNGYWWTTERKMLQSLIDKSQEKVNGTVRIKLYKGSVIVVGRKSNNSLYSYNLASFDSESQGYDHKDAEGFIKVNSLRLKKS.

ATP-binding positions include 7-15 (AYSGGLDTS) and Ala34. Tyr85 and Ser90 together coordinate L-citrulline. Gly115 is a binding site for ATP. 3 residues coordinate L-aspartate: Thr117, Asn121, and Asp122. L-citrulline is bound at residue Asn121. Residues Arg125, Ser176, Ser185, Glu261, and Tyr273 each contribute to the L-citrulline site.

Belongs to the argininosuccinate synthase family. Type 1 subfamily. Homotetramer.

Its subcellular location is the cytoplasm. It carries out the reaction L-citrulline + L-aspartate + ATP = 2-(N(omega)-L-arginino)succinate + AMP + diphosphate + H(+). Its pathway is amino-acid biosynthesis; L-arginine biosynthesis; L-arginine from L-ornithine and carbamoyl phosphate: step 2/3. This Ehrlichia ruminantium (strain Welgevonden) protein is Argininosuccinate synthase.